The chain runs to 226 residues: Small ribosomal subunit protein uS3 (226 aa).

The KH type-2 domain occupies 39–107 (VRNFIRKKLA…PVHINIEEIR (69 aa)).

Belongs to the universal ribosomal protein uS3 family. In terms of assembly, part of the 30S ribosomal subunit. Forms a tight complex with proteins S10 and S14.

Binds the lower part of the 30S subunit head. Binds mRNA in the 70S ribosome, positioning it for translation. This Alkalilimnicola ehrlichii (strain ATCC BAA-1101 / DSM 17681 / MLHE-1) protein is Small ribosomal subunit protein uS3.